Here is a 142-residue protein sequence, read N- to C-terminus: Hemoglobin subunit alpha-B (142 aa).

The region spanning valine 2–arginine 142 is the Globin domain. Position 59 (histidine 59) interacts with O2. Residue histidine 88 participates in heme b binding.

It belongs to the globin family. Heterotetramer of two alpha chains and two beta chains. In terms of tissue distribution, red blood cells.

Involved in oxygen transport from the lung to the various peripheral tissues. The protein is Hemoglobin subunit alpha-B (HBAB) of Otolemur crassicaudatus (Brown greater galago).